The chain runs to 199 residues: NAD(P)H dehydrogenase (quinone) (199 aa).

The Flavodoxin-like domain occupies 4–190 (ILVLYYSSWG…EGARFQGKRL (187 aa)). FMN-binding positions include 10–15 (SSWGHM) and 78–80 (TRY). Trp12 is an NAD(+) binding site. Trp98 serves as a coordination point for substrate. FMN contacts are provided by residues 113–119 (STATQHG) and His134. The segment at 155–175 (VRGGAPYGMTTTSDTDGSRMP) is disordered.

The protein belongs to the WrbA family. FMN is required as a cofactor.

The catalysed reaction is a quinone + NADH + H(+) = a quinol + NAD(+). The enzyme catalyses a quinone + NADPH + H(+) = a quinol + NADP(+). The sequence is that of NAD(P)H dehydrogenase (quinone) from Chelativorans sp. (strain BNC1).